The sequence spans 308 residues: Ornithine carbamoyltransferase (308 aa).

Carbamoyl phosphate-binding positions include 53-56 (STRT), glutamine 80, arginine 104, and 131-134 (HPCQ). L-ornithine-binding positions include asparagine 162, aspartate 225, and 229 to 230 (SM). Carbamoyl phosphate-binding positions include 265–266 (CL) and arginine 293.

The protein belongs to the aspartate/ornithine carbamoyltransferase superfamily. OTCase family.

It localises to the cytoplasm. It catalyses the reaction carbamoyl phosphate + L-ornithine = L-citrulline + phosphate + H(+). The protein operates within amino-acid biosynthesis; L-arginine biosynthesis; L-arginine from L-ornithine and carbamoyl phosphate: step 1/3. Reversibly catalyzes the transfer of the carbamoyl group from carbamoyl phosphate (CP) to the N(epsilon) atom of ornithine (ORN) to produce L-citrulline. The protein is Ornithine carbamoyltransferase (argF) of Synechocystis sp. (strain ATCC 27184 / PCC 6803 / Kazusa).